The following is a 309-amino-acid chain: Taste receptor type 2 member 43 (309 aa).

Met-1 is a topological domain (extracellular). Residues 2–22 form a helical membrane-spanning segment; that stretch reads ITFLPIIFSSLVVVTFVIGNF. Over 23 to 46 the chain is Cytoplasmic; the sequence is ANGFIALVNSIEWFKRQKISFADQ. Residues 47–67 form a helical membrane-spanning segment; that stretch reads ILTALAVSRVGLLWVLLLNWY. Topologically, residues 68 to 86 are extracellular; the sequence is STVLNPAFNSVEVRTTAYN. Residues 87 to 107 traverse the membrane as a helical segment; sequence IWAVINHFSNWLATTLSIFYL. At 108–126 the chain is on the cytoplasmic side; sequence LKIANFSNFIFLHLKRRVK. A helical membrane pass occupies residues 127-147; sequence SVILVMLLGPLLFLACHLFVI. The Extracellular portion of the chain corresponds to 148–178; that stretch reads NMNEIVRTKEFEGNMTWKIKLKSAMYFSNMT. Asn-161 and Asn-176 each carry an N-linked (GlcNAc...) asparagine glycan. Residues 179-199 traverse the membrane as a helical segment; sequence VTMVANLVPFTLTLLSFMLLI. The Cytoplasmic portion of the chain corresponds to 200–229; that stretch reads CSLCKHLKKMQLHGKGSQDPSTKVHIKALQ. Residues 230-250 traverse the membrane as a helical segment; that stretch reads TVISFLLLCAIYFLSIMISVW. Over 251-259 the chain is Extracellular; it reads SFGSLENKP. A helical transmembrane segment spans residues 260-280; sequence VFMFCKAIRFSYPSIHPFILI. The Cytoplasmic portion of the chain corresponds to 281 to 309; that stretch reads WGNKKLKQTFLSVFWQMRYWVKGEKTSSP.

Belongs to the G-protein coupled receptor T2R family. As to expression, expressed in subsets of taste receptor cells of the tongue and exclusively in gustducin-positive cells. Expressed in airway epithelia.

Its subcellular location is the membrane. It is found in the cell projection. The protein resides in the cilium membrane. Gustducin-coupled receptor immplicated in the perception of bitter compounds in the oral cavity and the gastrointestinal tract. Signals through PLCB2 and the calcium-regulated cation channel TRPM5. Activated by the sulfonyl amide sweeteners saccharin and acesulfame K. In airway epithelial cells, binding of bitter compounds increases the intracellular calcium ion concentration and stimulates ciliary beat frequency. May act as chemosensory receptors in airway epithelial cells to detect and eliminate potential noxious agents from the airways. The protein is Taste receptor type 2 member 43 (TAS2R43) of Homo sapiens (Human).